Reading from the N-terminus, the 762-residue chain is 5-methyltetrahydropteroyltriglutamate--homocysteine methyltransferase (762 aa).

5-methyltetrahydropteroyltri-L-glutamate contacts are provided by residues 16-19 and Lys117; that span reads RELK. Residues 438–440 and Glu491 each bind L-homocysteine; that span reads IGS. Residues 438 to 440 and Glu491 contribute to the L-methionine site; that span reads IGS. 5-methyltetrahydropteroyltri-L-glutamate contacts are provided by residues 522-523 and Trp568; that span reads RC. Asp606 is an L-homocysteine binding site. Residue Asp606 participates in L-methionine binding. 5-methyltetrahydropteroyltri-L-glutamate is bound at residue Glu612. Zn(2+) is bound by residues His648, Cys650, and Glu672. The active-site Proton donor is the His701. Position 733 (Cys733) interacts with Zn(2+).

It belongs to the vitamin-B12 independent methionine synthase family. The cofactor is Zn(2+).

The catalysed reaction is 5-methyltetrahydropteroyltri-L-glutamate + L-homocysteine = tetrahydropteroyltri-L-glutamate + L-methionine. The protein operates within amino-acid biosynthesis; L-methionine biosynthesis via de novo pathway; L-methionine from L-homocysteine (MetE route): step 1/1. Functionally, catalyzes the transfer of a methyl group from 5-methyltetrahydrofolate to homocysteine resulting in methionine formation. The polypeptide is 5-methyltetrahydropteroyltriglutamate--homocysteine methyltransferase (Pseudomonas fluorescens (strain ATCC BAA-477 / NRRL B-23932 / Pf-5)).